We begin with the raw amino-acid sequence, 625 residues long: Phosphomethylpyrimidine synthase (625 aa).

Residues Asn231, Met260, Tyr289, His325, 345–347, 386–389, and Glu425 each bind substrate; these read SRG and DGLR. His429 contributes to the Zn(2+) binding site. Tyr452 lines the substrate pocket. His493 provides a ligand contact to Zn(2+). Residues Cys573, Cys576, and Cys581 each contribute to the [4Fe-4S] cluster site.

Belongs to the ThiC family. As to quaternary structure, homodimer. [4Fe-4S] cluster serves as cofactor.

The catalysed reaction is 5-amino-1-(5-phospho-beta-D-ribosyl)imidazole + S-adenosyl-L-methionine = 4-amino-2-methyl-5-(phosphooxymethyl)pyrimidine + CO + 5'-deoxyadenosine + formate + L-methionine + 3 H(+). Its pathway is cofactor biosynthesis; thiamine diphosphate biosynthesis. Its function is as follows. Catalyzes the synthesis of the hydroxymethylpyrimidine phosphate (HMP-P) moiety of thiamine from aminoimidazole ribotide (AIR) in a radical S-adenosyl-L-methionine (SAM)-dependent reaction. The chain is Phosphomethylpyrimidine synthase from Acinetobacter baumannii (strain AB0057).